The chain runs to 263 residues: 3-methyl-2-oxobutanoate hydroxymethyltransferase (263 aa).

Mg(2+) is bound by residues Asp-43 and Asp-82. 3-methyl-2-oxobutanoate-binding positions include 43 to 44 (DS), Asp-82, and Lys-111. Glu-113 provides a ligand contact to Mg(2+). The active-site Proton acceptor is the Glu-179.

This sequence belongs to the PanB family. In terms of assembly, homodecamer; pentamer of dimers. The cofactor is Mg(2+).

Its subcellular location is the cytoplasm. The catalysed reaction is 3-methyl-2-oxobutanoate + (6R)-5,10-methylene-5,6,7,8-tetrahydrofolate + H2O = 2-dehydropantoate + (6S)-5,6,7,8-tetrahydrofolate. It functions in the pathway cofactor biosynthesis; (R)-pantothenate biosynthesis; (R)-pantoate from 3-methyl-2-oxobutanoate: step 1/2. Catalyzes the reversible reaction in which hydroxymethyl group from 5,10-methylenetetrahydrofolate is transferred onto alpha-ketoisovalerate to form ketopantoate. The polypeptide is 3-methyl-2-oxobutanoate hydroxymethyltransferase (Neisseria gonorrhoeae (strain ATCC 700825 / FA 1090)).